The primary structure comprises 92 residues: UPF0235 protein PF1765 (92 aa).

This sequence belongs to the UPF0235 family.

The polypeptide is UPF0235 protein PF1765 (Pyrococcus furiosus (strain ATCC 43587 / DSM 3638 / JCM 8422 / Vc1)).